Reading from the N-terminus, the 230-residue chain is Probable endonuclease C19F8.04c (230 aa).

The helical transmembrane segment at 10-27 (AIIGTGLITTSIGGFFFL) threads the bilayer. In terms of domain architecture, TNase-like spans 55–216 (KTMFGYVTRV…KKKKLSLWSQ (162 aa)). Arg104 is a catalytic residue. A Ca(2+)-binding site is contributed by Asp109. Residues Glu112 and Arg152 contribute to the active site.

This sequence belongs to the LCL3 family.

Its subcellular location is the mitochondrion. It localises to the membrane. The protein is Probable endonuclease C19F8.04c of Schizosaccharomyces pombe (strain 972 / ATCC 24843) (Fission yeast).